Here is a 186-residue protein sequence, read N- to C-terminus: ATP synthase subunit b, chloroplastic (186 aa).

The helical transmembrane segment at 26 to 44 threads the bilayer; sequence ILETNLINLGVVIGTLLYF.

The protein belongs to the ATPase B chain family. As to quaternary structure, F-type ATPases have 2 components, F(1) - the catalytic core - and F(0) - the membrane proton channel. F(1) has five subunits: alpha(3), beta(3), gamma(1), delta(1), epsilon(1). F(0) has four main subunits: a(1), b(1), b'(1) and c(10-14). The alpha and beta chains form an alternating ring which encloses part of the gamma chain. F(1) is attached to F(0) by a central stalk formed by the gamma and epsilon chains, while a peripheral stalk is formed by the delta, b and b' chains.

The protein resides in the plastid. It localises to the chloroplast thylakoid membrane. In terms of biological role, f(1)F(0) ATP synthase produces ATP from ADP in the presence of a proton or sodium gradient. F-type ATPases consist of two structural domains, F(1) containing the extramembraneous catalytic core and F(0) containing the membrane proton channel, linked together by a central stalk and a peripheral stalk. During catalysis, ATP synthesis in the catalytic domain of F(1) is coupled via a rotary mechanism of the central stalk subunits to proton translocation. Component of the F(0) channel, it forms part of the peripheral stalk, linking F(1) to F(0). The protein is ATP synthase subunit b, chloroplastic of Chara vulgaris (Common stonewort).